The sequence spans 258 residues: UPF0328 protein ECU07_0060 (258 aa).

The protein belongs to the UPF0328 family.

The protein is UPF0328 protein ECU07_0060 of Encephalitozoon cuniculi (strain GB-M1) (Microsporidian parasite).